Here is a 703-residue protein sequence, read N- to C-terminus: Epidermal growth factor receptor (703 aa).

Residues 1 to 30 (MGVRSPLSASGPRGAAVLVLLLLGVALCSA) form the signal peptide. Topologically, residues 31 to 654 (VEEKKVCQGT…GCPNGSKTPS (624 aa)) are extracellular. The cysteines at positions 37 and 64 are disulfide-linked. N-linked (GlcNAc...) asparagine glycosylation is found at Asn134, Asn190, and Asn200. 13 cysteine pairs are disulfide-bonded: Cys164-Cys194, Cys197-Cys206, Cys201-Cys214, Cys222-Cys230, Cys226-Cys238, Cys239-Cys247, Cys243-Cys255, Cys258-Cys267, Cys271-Cys298, Cys302-Cys314, Cys318-Cys333, Cys336-Cys340, and Cys344-Cys369. Residues Asn359, Asn368, and Asn420 are each glycosylated (N-linked (GlcNAc...) asparagine). 11 disulfides stabilise this stretch: Cys477/Cys506, Cys513/Cys522, Cys517/Cys530, Cys533/Cys542, Cys546/Cys562, Cys565/Cys581, Cys569/Cys589, Cys592/Cys601, Cys605/Cys627, Cys630/Cys638, and Cys634/Cys646. N-linked (GlcNAc...) asparagine glycosylation is found at Asn573 and Asn578. N-linked (GlcNAc...) asparagine glycosylation is found at Asn613 and Asn633. The N-linked (GlcNAc...) asparagine glycan is linked to Asn648. Residues 655 to 667 (IAAGVVGGLLCLV) form a helical membrane-spanning segment. At 668–703 (VVGLGIGLYLRRRHIVRKRTLRRLLQERELVEPLTP) the chain is on the cytoplasmic side. Phosphothreonine is present on residues Thr687 and Thr702.

Belongs to the protein kinase superfamily. Tyr protein kinase family. EGF receptor subfamily. Binding of the ligand triggers homo- and/or heterodimerization of the receptor triggering its autophosphorylation. Post-translationally, phosphorylated. Autophosphorylates.

The protein localises to the cell membrane. It is found in the endoplasmic reticulum membrane. Its subcellular location is the golgi apparatus membrane. It localises to the nucleus membrane. The protein resides in the endosome. The protein localises to the endosome membrane. It is found in the nucleus. The enzyme catalyses L-tyrosyl-[protein] + ATP = O-phospho-L-tyrosyl-[protein] + ADP + H(+). With respect to regulation, endocytosis and inhibition of the activated EGFR by phosphatases constitute immediate regulatory mechanisms. Moreover, inducible feedback inhibitors may constitute alternative regulatory mechanisms for the EGFR signaling. Receptor tyrosine kinase binding ligands of the EGF family and activating several signaling cascades to convert extracellular cues into appropriate cellular responses. Known ligands include EGF and TGFA/TGF-alpha. Ligand binding triggers receptor homo- and/or heterodimerization and autophosphorylation on key cytoplasmic residues. The phosphorylated receptor recruits adapter proteins like GRB2 which in turn activates complex downstream signaling cascades. Activates at least 4 major downstream signaling cascades including the RAS-RAF-MEK-ERK, PI3 kinase-AKT, PLCgamma-PKC and STATs modules. May also activate the NF-kappa-B signaling cascade. The sequence is that of Epidermal growth factor receptor (EGFR) from Gallus gallus (Chicken).